A 135-amino-acid chain; its full sequence is MVNVERISISFPKFLLKEIDEVVKKKGYSSRSELIRDAVRKYVLENNPLNKNETVSGIIIVVYNPTKEALEKMSKLYFEHNKVIKSLNQAYVTTSCGKNAKVEIFVVEGNSKDISKFYEEIEKINGKIYDKVIIF.

It belongs to the transcriptional regulatory CopG/NikR family.

This is an uncharacterized protein from Methanocaldococcus jannaschii (strain ATCC 43067 / DSM 2661 / JAL-1 / JCM 10045 / NBRC 100440) (Methanococcus jannaschii).